We begin with the raw amino-acid sequence, 74 residues long: Large ribosomal subunit protein bL31 (74 aa).

It belongs to the bacterial ribosomal protein bL31 family. Type A subfamily. As to quaternary structure, part of the 50S ribosomal subunit.

Functionally, binds the 23S rRNA. This chain is Large ribosomal subunit protein bL31, found in Afipia carboxidovorans (strain ATCC 49405 / DSM 1227 / KCTC 32145 / OM5) (Oligotropha carboxidovorans).